We begin with the raw amino-acid sequence, 539 residues long: CTP synthase (539 aa).

Residues Met1–Ile267 form an amidoligase domain region. A CTP-binding site is contributed by Ser13. Ser13 provides a ligand contact to UTP. Ser14–Ile19 contributes to the ATP binding site. Tyr54 serves as a coordination point for L-glutamine. ATP is bound at residue Asp71. Mg(2+)-binding residues include Asp71 and Glu141. Residues Asp148–Glu150, Lys188–Gln193, and Lys224 each bind CTP. UTP contacts are provided by residues Lys188–Gln193 and Lys224. The Glutamine amidotransferase type-1 domain maps to Lys294–Asp537. Gly356 is an L-glutamine binding site. Cys383 acts as the Nucleophile; for glutamine hydrolysis in catalysis. L-glutamine contacts are provided by residues Leu384–Gln387, Glu407, and Arg465. Residues His510 and Glu512 contribute to the active site.

This sequence belongs to the CTP synthase family. Homotetramer.

It catalyses the reaction UTP + L-glutamine + ATP + H2O = CTP + L-glutamate + ADP + phosphate + 2 H(+). The catalysed reaction is L-glutamine + H2O = L-glutamate + NH4(+). It carries out the reaction UTP + NH4(+) + ATP = CTP + ADP + phosphate + 2 H(+). The protein operates within pyrimidine metabolism; CTP biosynthesis via de novo pathway; CTP from UDP: step 2/2. Allosterically activated by GTP, when glutamine is the substrate; GTP has no effect on the reaction when ammonia is the substrate. The allosteric effector GTP functions by stabilizing the protein conformation that binds the tetrahedral intermediate(s) formed during glutamine hydrolysis. Inhibited by the product CTP, via allosteric rather than competitive inhibition. Functionally, catalyzes the ATP-dependent amination of UTP to CTP with either L-glutamine or ammonia as the source of nitrogen. Regulates intracellular CTP levels through interactions with the four ribonucleotide triphosphates. The protein is CTP synthase of Lactobacillus delbrueckii subsp. bulgaricus (strain ATCC BAA-365 / Lb-18).